Here is a 514-residue protein sequence, read N- to C-terminus: 2,3-bisphosphoglycerate-independent phosphoglycerate mutase (514 aa).

Asp-13 and Ser-69 together coordinate Mn(2+). The active-site Phosphoserine intermediate is Ser-69. Substrate contacts are provided by residues His-128, 158 to 159 (RD), Arg-189, Arg-195, 263 to 266 (RADR), and Lys-336. 5 residues coordinate Mn(2+): Asp-402, His-406, Asp-443, His-444, and His-461.

The protein belongs to the BPG-independent phosphoglycerate mutase family. Monomer. Mn(2+) is required as a cofactor.

It carries out the reaction (2R)-2-phosphoglycerate = (2R)-3-phosphoglycerate. It functions in the pathway carbohydrate degradation; glycolysis; pyruvate from D-glyceraldehyde 3-phosphate: step 3/5. Its function is as follows. Catalyzes the interconversion of 2-phosphoglycerate and 3-phosphoglycerate. This Akkermansia muciniphila (strain ATCC BAA-835 / DSM 22959 / JCM 33894 / BCRC 81048 / CCUG 64013 / CIP 107961 / Muc) protein is 2,3-bisphosphoglycerate-independent phosphoglycerate mutase.